Here is a 554-residue protein sequence, read N- to C-terminus: Glutamine--tRNA ligase (554 aa).

The short motif at 34–44 (PEPNGYLHIGH) is the 'HIGH' region element. ATP-binding positions include 35-37 (EPN) and 41-47 (HIGHAKS). L-glutamine contacts are provided by Asp-67 and Tyr-212. ATP contacts are provided by residues Thr-231, 261–262 (RL), and 269–271 (MSK). The short motif at 268-272 (VMSKR) is the 'KMSKS' region element. The interval 317–324 (TKQDNTIE) is interaction with tRNA.

The protein belongs to the class-I aminoacyl-tRNA synthetase family. As to quaternary structure, monomer.

It is found in the cytoplasm. It catalyses the reaction tRNA(Gln) + L-glutamine + ATP = L-glutaminyl-tRNA(Gln) + AMP + diphosphate. This is Glutamine--tRNA ligase from Shigella flexneri serotype 5b (strain 8401).